The sequence spans 1343 residues: Spermatogenesis-associated protein 31A6 (1343 aa).

A helical membrane pass occupies residues 23 to 43; that stretch reads PWVLDIFLTLVFALGFFFLLL. Disordered regions lie at residues 55-88, 106-235, 624-654, 895-951, 1080-1156, and 1309-1331; these read PSPS…RECP, GPHL…STLI, DESP…EAQK, PRGI…REAV, VQEE…PPSV, and KAVS…SHHH. Residues 60–82 are compositionally biased toward basic residues; it reads GKRKCPVGRRRRPRGRMKNHSLR. Polar residues predominate over residues 165 to 178; that stretch reads LASTPSPGPMTTSV. Residues 198–222 are compositionally biased toward pro residues; the sequence is PEPPALFPHPPHTPDPLACSPPPPK. Composition is skewed to polar residues over residues 627–647 and 923–944; these read PGTS…STGE and LTYS…SSKA. 2 stretches are compositionally biased toward basic and acidic residues: residues 1104–1123 and 1133–1142; these read HKSE…RLEG and RKTEDTHQDE.

Belongs to the SPATA31 family.

It is found in the membrane. Its function is as follows. May play a role in spermatogenesis. The sequence is that of Spermatogenesis-associated protein 31A6 (SPATA31A6) from Homo sapiens (Human).